Here is a 513-residue protein sequence, read N- to C-terminus: ETS translocation variant 3 (513 aa).

Positions 35-116 form a DNA-binding region, ETS; that stretch reads IQLWHFILEL…KGKRFTYKFN (82 aa). The interval 138–202 is disordered; that stretch reads QSAPPVPTAS…DLEDGSASDW (65 aa). Residues Ser-139, Ser-159, and Ser-315 each carry the phosphoserine modification. Residues 333 to 513 are disordered; it reads QMHPEEPSQF…ATTATAAADA (181 aa). Composition is skewed to basic and acidic residues over residues 357–366, 380–392, and 399–419; these read ERVESREEAV, IKVE…DPDS, and GKEE…EEGK. A Glycyl lysine isopeptide (Lys-Gly) (interchain with G-Cter in SUMO2) cross-link involves residue Lys-381. Lys-388 is modified (N6-acetyllysine; alternate). Lys-388 is covalently cross-linked (Glycyl lysine isopeptide (Lys-Gly) (interchain with G-Cter in SUMO2); alternate). Residues 430–439 are compositionally biased toward polar residues; sequence WPSVSISTPS. Acidic residues predominate over residues 441–450; it reads EPLEGTEDSE. Composition is skewed to basic and acidic residues over residues 451–466 and 477–489; these read DRSV…KEDA and RWND…ELNK. Positions 504 to 513 are enriched in low complexity; sequence ATTATAAADA.

The protein belongs to the ETS family.

It is found in the nucleus. Transcriptional repressor that contribute to growth arrest during terminal macrophage differentiation by repressing target genes involved in Ras-dependent proliferation. Represses MMP1 promoter activity. This chain is ETS translocation variant 3 (Etv3), found in Mus musculus (Mouse).